Reading from the N-terminus, the 382-residue chain is Porphobilinogen deaminase, chloroplastic (382 aa).

The N-terminal 62 residues, M1–A62, are a transit peptide targeting the chloroplast. Dipyrromethane is bound by residues R80 and S82. A Phosphoserine modification is found at S123. Dipyrromethane is bound by residues K156–D157, T200–K206, and R223–R229. Residue D157 is the Proton donor/acceptor of the active site. At C316 the chain carries S-(dipyrrolylmethanemethyl)cysteine.

It belongs to the HMBS family. Monomer. Dipyrromethane is required as a cofactor.

Its subcellular location is the plastid. It localises to the chloroplast. It catalyses the reaction 4 porphobilinogen + H2O = hydroxymethylbilane + 4 NH4(+). The protein operates within porphyrin-containing compound metabolism; protoporphyrin-IX biosynthesis; coproporphyrinogen-III from 5-aminolevulinate: step 2/4. It participates in porphyrin-containing compound metabolism; chlorophyll biosynthesis. Inhibited by NH(3), heavy-metal ions, hydroxylamine and 2-bromoporphobilinogen. Not inhibited by N-ethylmaleimide. Tetrapolymerization of the monopyrrole PBG into the hydroxymethylbilane pre-uroporphyrinogen in several discrete steps. This chain is Porphobilinogen deaminase, chloroplastic (HEMC), found in Arabidopsis thaliana (Mouse-ear cress).